The chain runs to 417 residues: NADH-quinone oxidoreductase subunit D (417 aa).

Belongs to the complex I 49 kDa subunit family. As to quaternary structure, NDH-1 is composed of 14 different subunits. Subunits NuoB, C, D, E, F, and G constitute the peripheral sector of the complex.

Its subcellular location is the cell inner membrane. It catalyses the reaction a quinone + NADH + 5 H(+)(in) = a quinol + NAD(+) + 4 H(+)(out). Its function is as follows. NDH-1 shuttles electrons from NADH, via FMN and iron-sulfur (Fe-S) centers, to quinones in the respiratory chain. The immediate electron acceptor for the enzyme in this species is believed to be ubiquinone. Couples the redox reaction to proton translocation (for every two electrons transferred, four hydrogen ions are translocated across the cytoplasmic membrane), and thus conserves the redox energy in a proton gradient. This chain is NADH-quinone oxidoreductase subunit D, found in Verminephrobacter eiseniae (strain EF01-2).